A 227-amino-acid polypeptide reads, in one-letter code: Probable septum site-determining protein MinC (227 aa).

The protein belongs to the MinC family. In terms of assembly, interacts with MinD and FtsZ.

In terms of biological role, cell division inhibitor that blocks the formation of polar Z ring septums. Rapidly oscillates between the poles of the cell to destabilize FtsZ filaments that have formed before they mature into polar Z rings. Prevents FtsZ polymerization. This is Probable septum site-determining protein MinC from Photorhabdus laumondii subsp. laumondii (strain DSM 15139 / CIP 105565 / TT01) (Photorhabdus luminescens subsp. laumondii).